Here is a 227-residue protein sequence, read N- to C-terminus: Putative molybdenum transport system permease protein YvgM (227 aa).

The next 5 helical transmembrane spans lie at 17-37 (VVLS…LGTL), 57-77 (FMLP…VIFG), 94-114 (VIFT…PLMY), 142-162 (VFIH…SILS), and 201-221 (TLAW…LFFI). The ABC transmembrane type-1 domain maps to 17 to 221 (VVLSFQVAAV…VISFLMLFFI (205 aa)).

This sequence belongs to the binding-protein-dependent transport system permease family. CysTW subfamily.

Its subcellular location is the cell membrane. Could be part of the binding-protein-dependent transport system for molybdenum; probably responsible for the translocation of the substrate across the membrane. The protein is Putative molybdenum transport system permease protein YvgM (yvgM) of Bacillus subtilis (strain 168).